The following is a 133-amino-acid chain: DNA-directed RNA polymerase subunit omega (133 aa).

This sequence belongs to the RNA polymerase subunit omega family. In terms of assembly, the RNAP catalytic core consists of 2 alpha, 1 beta, 1 beta' and 1 omega subunit. When a sigma factor is associated with the core the holoenzyme is formed, which can initiate transcription.

It catalyses the reaction RNA(n) + a ribonucleoside 5'-triphosphate = RNA(n+1) + diphosphate. In terms of biological role, promotes RNA polymerase assembly. Latches the N- and C-terminal regions of the beta' subunit thereby facilitating its interaction with the beta and alpha subunits. The chain is DNA-directed RNA polymerase subunit omega from Mesorhizobium japonicum (strain LMG 29417 / CECT 9101 / MAFF 303099) (Mesorhizobium loti (strain MAFF 303099)).